Consider the following 205-residue polypeptide: Peptidyl-tRNA hydrolase (205 aa).

A tRNA-binding site is contributed by tyrosine 17. Catalysis depends on histidine 22, which acts as the Proton acceptor. Residues tyrosine 73 and asparagine 75 each contribute to the tRNA site.

The protein belongs to the PTH family. As to quaternary structure, monomer.

The protein localises to the cytoplasm. The catalysed reaction is an N-acyl-L-alpha-aminoacyl-tRNA + H2O = an N-acyl-L-amino acid + a tRNA + H(+). Functionally, hydrolyzes ribosome-free peptidyl-tRNAs (with 1 or more amino acids incorporated), which drop off the ribosome during protein synthesis, or as a result of ribosome stalling. Catalyzes the release of premature peptidyl moieties from peptidyl-tRNA molecules trapped in stalled 50S ribosomal subunits, and thus maintains levels of free tRNAs and 50S ribosomes. This Maridesulfovibrio salexigens (strain ATCC 14822 / DSM 2638 / NCIMB 8403 / VKM B-1763) (Desulfovibrio salexigens) protein is Peptidyl-tRNA hydrolase.